Reading from the N-terminus, the 152-residue chain is Deoxyuridine 5'-triphosphate nucleotidohydrolase (152 aa).

Substrate-binding positions include 71 to 73, Asn84, 88 to 90, and Met98; these read RSG and LID.

This sequence belongs to the dUTPase family. Mg(2+) serves as cofactor.

It catalyses the reaction dUTP + H2O = dUMP + diphosphate + H(+). It functions in the pathway pyrimidine metabolism; dUMP biosynthesis; dUMP from dCTP (dUTP route): step 2/2. Functionally, this enzyme is involved in nucleotide metabolism: it produces dUMP, the immediate precursor of thymidine nucleotides and it decreases the intracellular concentration of dUTP so that uracil cannot be incorporated into DNA. This is Deoxyuridine 5'-triphosphate nucleotidohydrolase from Shewanella baltica (strain OS185).